The primary structure comprises 104 residues: MIRKAFVMQVNADAHEEYQRRHNPIWPELEAVLKSHGAHHYAIYLDQERNLLFATVEIESEERWNAVASTDVCQRWWKHMRDVMPANPDNSPVNAELKEVFYLQ.

A substrate-binding site is contributed by tyrosine 18. Histidine 22 acts as the Proton donor in catalysis. Residues tyrosine 41 and 76–77 contribute to the substrate site; that span reads WW.

The protein belongs to the rhamnose mutarotase family. As to quaternary structure, homodimer.

The protein resides in the cytoplasm. The enzyme catalyses alpha-L-rhamnose = beta-L-rhamnose. The protein operates within carbohydrate metabolism; L-rhamnose metabolism. Functionally, involved in the anomeric conversion of L-rhamnose. This Salmonella heidelberg (strain SL476) protein is L-rhamnose mutarotase.